The following is a 450-amino-acid chain: tRNA-2-methylthio-N(6)-dimethylallyladenosine synthase (450 aa).

The MTTase N-terminal domain maps to 3 to 118; sequence KKVFIKTFGC…LPELLQQRER (116 aa). [4Fe-4S] cluster contacts are provided by cysteine 12, cysteine 49, cysteine 81, cysteine 155, cysteine 159, and cysteine 162. Residues 141-376 form the Radical SAM core domain; sequence SVQGASAFVS…VIDTHIRSIS (236 aa). In terms of domain architecture, TRAM spans 377–440; it reads ASRVGTVQRI…AYTLRGQYCA (64 aa).

It belongs to the methylthiotransferase family. MiaB subfamily. Monomer. The cofactor is [4Fe-4S] cluster.

The protein localises to the cytoplasm. It catalyses the reaction N(6)-dimethylallyladenosine(37) in tRNA + (sulfur carrier)-SH + AH2 + 2 S-adenosyl-L-methionine = 2-methylsulfanyl-N(6)-dimethylallyladenosine(37) in tRNA + (sulfur carrier)-H + 5'-deoxyadenosine + L-methionine + A + S-adenosyl-L-homocysteine + 2 H(+). In terms of biological role, catalyzes the methylthiolation of N6-(dimethylallyl)adenosine (i(6)A), leading to the formation of 2-methylthio-N6-(dimethylallyl)adenosine (ms(2)i(6)A) at position 37 in tRNAs that read codons beginning with uridine. The chain is tRNA-2-methylthio-N(6)-dimethylallyladenosine synthase from Verminephrobacter eiseniae (strain EF01-2).